Reading from the N-terminus, the 109-residue chain is Nucleoid-associated protein HS_1309 (109 aa).

Belongs to the YbaB/EbfC family. In terms of assembly, homodimer.

The protein localises to the cytoplasm. It is found in the nucleoid. In terms of biological role, binds to DNA and alters its conformation. May be involved in regulation of gene expression, nucleoid organization and DNA protection. This chain is Nucleoid-associated protein HS_1309, found in Histophilus somni (strain 129Pt) (Haemophilus somnus).